The following is a 720-amino-acid chain: MVDFSLKKHGVSSWGRGSLSRKESSAGDSSSTFKSSRYQDMKVSDPELPKVSAKERSKAGTMMKRRLSVHQSNNFGAVKMDFDNMPALPSSAADYSFASNVGNATQTSLITEDQLPDRNTSLASLNTNTRRPDQELYSSKSLRQILSNPDFKAKKFITEKLGDATAVDIDQFTSNLNDLSLEIQDEIKFNIDKSFKEILIVNKGLETATTELKVLRTKVQEMKDIMNQFVTIAEKKLQAEQAANETADLNRTSSSASLSNHSLLPPLKPTPSATRKDRTSVYILERMWNEELMTLFKNVDGAHKYITSTPGRHILLESDNWIEINPATLKPLQKVRLFILNDVVLIAAPKPSKQTELTVSRFSPLRDVTVEVQSEHELSFNFSNKQHTLYRHRDPQVFSKVIDIIRQAKDALREISQAEEDTTRKIRNSYTLLQQERTPNRDATTSPVKVHGRQRSYGGTGTPSRHRSDAQNDALLTNITRSIHVRMGSEETTEVTKRLKRLDDALEDLDLEIGRQNFDLAITKLNHIQSSLKSLYSSATFDESVMVELLSLKCSQRKTILYTKLTNLLACETSDMTKLKSYMLNLVALNEPVDALEVFLQNRSNFINDLTLQIGIIDNVTSFITQVAIIRFQTLKKVTQQYLEVSKNLKRDYTSLLVCWCSEEVDKHFQLMERELSNSSTLSVQAIKITRKQIDELKPVGMDYVYKLDDFIRRNNNRIL.

A disordered region spans residues Met-1–Met-63. Polar residues predominate over residues Ala-26–Ser-36. Over residues Arg-37–Lys-58 the composition is skewed to basic and acidic residues. Positions Asp-168–Thr-252 form a coiled coil. Lys-188 participates in a covalent cross-link: Glycyl lysine isopeptide (Lys-Gly) (interchain with G-Cter in ubiquitin). Polar residues predominate over residues Ala-243–Thr-252. 2 disordered regions span residues Ala-243 to Arg-275 and Gln-434 to Ala-470. The span at Ser-253–Pro-265 shows a compositional bias: low complexity. Positions Gln-434–Pro-447 are enriched in polar residues.

It belongs to the EXO84 family. Component of the exocyst complex.

It is found in the cytoplasmic vesicle. The protein resides in the secretory vesicle. Involved in the secretory pathway as part of the exocyst complex which tethers secretory vesicles to the sites of exocytosis. Plays a role in both the assembly of the exocyst and the polarization of this complex to specific sites of the plasma membrane for exocytosis. Also involved in assembly of the spliceosome. This Kluyveromyces lactis (strain ATCC 8585 / CBS 2359 / DSM 70799 / NBRC 1267 / NRRL Y-1140 / WM37) (Yeast) protein is Exocyst complex component EXO84 (EXO84).